The following is a 401-amino-acid chain: Cysteine desulfurase CsdA (401 aa).

N6-(pyridoxal phosphate)lysine is present on lysine 222. The active-site Cysteine persulfide intermediate is cysteine 358.

It belongs to the class-V pyridoxal-phosphate-dependent aminotransferase family. Csd subfamily. As to quaternary structure, homodimer. Forms a heterodimer with CsdE. It depends on pyridoxal 5'-phosphate as a cofactor.

The enzyme catalyses (sulfur carrier)-H + L-cysteine = (sulfur carrier)-SH + L-alanine. It carries out the reaction L-selenocysteine + AH2 = hydrogenselenide + L-alanine + A + H(+). It catalyses the reaction 3-sulfino-L-alanine + H2O = sulfite + L-alanine + H(+). With respect to regulation, cysteine desulfurase activity is increased 2-fold in the presence of CsdE. Catalyzes the removal of elemental sulfur and selenium atoms from L-cysteine, L-cystine, L-selenocysteine, and L-selenocystine to produce L-alanine, and transiently retains the released sulfur atom on a cysteine residue, in the form of a persulfide. Can also desulfinate L-cysteine sulfinate (3-sulfino-L-alanine), which is the best substrate of the enzyme. Functions as a selenium delivery protein in the pathway for the biosynthesis of selenophosphate. Seems to participate in Fe/S biogenesis by recruiting the SufBCD-SufE proteins. Transfers sulfur to CsdE that increases the cysteine desulfurase activity of CsdA. Can also transfer sulfur directly to TcdA/CsdL in vitro. Appears to support the function of TcdA in the generation of cyclic threonylcarbamoyladenosine at position 37 (ct(6)A37) in tRNAs that read codons beginning with adenine. The chain is Cysteine desulfurase CsdA (csdA) from Escherichia coli (strain K12).